Reading from the N-terminus, the 165-residue chain is 3-hydroxyacyl-[acyl-carrier-protein] dehydratase FabZ (165 aa).

Residue His-64 is part of the active site.

This sequence belongs to the thioester dehydratase family. FabZ subfamily.

It localises to the cytoplasm. The enzyme catalyses a (3R)-hydroxyacyl-[ACP] = a (2E)-enoyl-[ACP] + H2O. Involved in unsaturated fatty acids biosynthesis. Catalyzes the dehydration of short chain beta-hydroxyacyl-ACPs and long chain saturated and unsaturated beta-hydroxyacyl-ACPs. The chain is 3-hydroxyacyl-[acyl-carrier-protein] dehydratase FabZ from Acidiphilium cryptum (strain JF-5).